Here is a 301-residue protein sequence, read N- to C-terminus: Diaminopimelate epimerase (301 aa).

Positions 15, 47, and 67 each coordinate substrate. Catalysis depends on Cys-76, which acts as the Proton donor. Substrate contacts are provided by residues 77-78 (GN), Asn-163, Asn-197, and 215-216 (ER). The active-site Proton acceptor is Cys-224. A substrate-binding site is contributed by 225–226 (GS).

It belongs to the diaminopimelate epimerase family. In terms of assembly, homodimer.

It is found in the cytoplasm. The enzyme catalyses (2S,6S)-2,6-diaminopimelate = meso-2,6-diaminopimelate. It functions in the pathway amino-acid biosynthesis; L-lysine biosynthesis via DAP pathway; DL-2,6-diaminopimelate from LL-2,6-diaminopimelate: step 1/1. In terms of biological role, catalyzes the stereoinversion of LL-2,6-diaminopimelate (L,L-DAP) to meso-diaminopimelate (meso-DAP), a precursor of L-lysine and an essential component of the bacterial peptidoglycan. The protein is Diaminopimelate epimerase of Rhizobium meliloti (strain 1021) (Ensifer meliloti).